Here is a 177-residue protein sequence, read N- to C-terminus: Small ribosomal subunit protein uS4 (177 aa).

In terms of domain architecture, S4 RNA-binding spans 104–168 (RRLQTLVFRK…SPMASESHPE (65 aa)). The segment at 157-177 (PNSPMASESHPERTDSVKDAE) is disordered. Residues 165 to 177 (SHPERTDSVKDAE) show a composition bias toward basic and acidic residues.

This sequence belongs to the universal ribosomal protein uS4 family. Part of the 30S ribosomal subunit. Contacts protein S5. The interaction surface between S4 and S5 is involved in control of translational fidelity.

Functionally, one of the primary rRNA binding proteins, it binds directly to 16S rRNA where it nucleates assembly of the body of the 30S subunit. Its function is as follows. With S5 and S12 plays an important role in translational accuracy. This Methanococcus aeolicus (strain ATCC BAA-1280 / DSM 17508 / OCM 812 / Nankai-3) protein is Small ribosomal subunit protein uS4.